Consider the following 419-residue polypeptide: Ribosome biogenesis protein WDR12 homolog (419 aa).

The tract at residues 10–91 (VQVHLKTKQE…EDSIEIEYVE (82 aa)) is ubiquitin-like (UBL) domain. WD repeat units follow at residues 103–140 (LHDD…KLTI), 142–184 (GHTA…NAVE), 191–230 (GHER…AGES), 249–287 (GHRE…IKTE), 289–328 (STNK…GSVV), 334–374 (GHNA…APLY), and 378–416 (GHGE…VENM).

It belongs to the WD repeat WDR12/YTM1 family.

Its subcellular location is the nucleus. The protein resides in the nucleolus. It is found in the nucleoplasm. Functionally, required for maturation of ribosomal RNAs and formation of the large ribosomal subunit. In Drosophila mojavensis (Fruit fly), this protein is Ribosome biogenesis protein WDR12 homolog.